The sequence spans 393 residues: PxcA-like protein (393 aa).

The next 4 helical transmembrane spans lie at 173–193, 271–291, 306–326, and 354–374; these read FLIVLIFIPLTVQILTKNLVF, IVNLLADIAGLVAFVVLIIVF, FLALNDITKVFIFILLTDMFV, and VYIFIATVPVFLDSLFKLLIF.

The protein belongs to the CemA family. PxcL subfamily.

Its subcellular location is the cell inner membrane. Functionally, together with PxcA, contributes to transient H(+) uptake following dark to light transition. Required for H(+) influx to activate the Calvin-Benson-Bassham cycle. May also be involved in CO(2) transport. This is PxcA-like protein from Synechocystis sp. (strain ATCC 27184 / PCC 6803 / Kazusa).